The following is a 316-amino-acid chain: Acetyl-coenzyme A carboxylase carboxyl transferase subunit alpha (316 aa).

One can recognise a CoA carboxyltransferase C-terminal domain in the interval 39–293 (RLQDKSESLT…REQLNSQLHM (255 aa)).

It belongs to the AccA family. In terms of assembly, acetyl-CoA carboxylase is a heterohexamer composed of biotin carboxyl carrier protein (AccB), biotin carboxylase (AccC) and two subunits each of ACCase subunit alpha (AccA) and ACCase subunit beta (AccD).

It is found in the cytoplasm. It catalyses the reaction N(6)-carboxybiotinyl-L-lysyl-[protein] + acetyl-CoA = N(6)-biotinyl-L-lysyl-[protein] + malonyl-CoA. Its pathway is lipid metabolism; malonyl-CoA biosynthesis; malonyl-CoA from acetyl-CoA: step 1/1. Functionally, component of the acetyl coenzyme A carboxylase (ACC) complex. First, biotin carboxylase catalyzes the carboxylation of biotin on its carrier protein (BCCP) and then the CO(2) group is transferred by the carboxyltransferase to acetyl-CoA to form malonyl-CoA. The polypeptide is Acetyl-coenzyme A carboxylase carboxyl transferase subunit alpha (Stutzerimonas stutzeri (strain A1501) (Pseudomonas stutzeri)).